Consider the following 590-residue polypeptide: 2-hydroxyacyl-CoA lyase (590 aa).

2-hydroxyisobutanoyl-CoA contacts are provided by residues Gly43, Gln128, Gln255, 273–274 (RS), and Arg362. 410 to 412 (GDL) provides a ligand contact to thiamine diphosphate. Arg417 is a 2-hydroxyisobutanoyl-CoA binding site. Thiamine diphosphate is bound at residue Gly433. Asp460 contributes to the Mg(2+) binding site. Thiamine diphosphate contacts are provided by residues 461 to 462 (GA) and 487 to 492 (NRAWNI). Residues Asn487 and Ala489 each coordinate Mg(2+). Residue Glu493 is the Proton acceptor of the active site. A 2-hydroxyisobutanoyl-CoA-binding site is contributed by 561 to 564 (DSGK). The interval 566–590 (LGFVPDYQALTPWNDAEVARRQEGI) is C-terminal lid.

This sequence belongs to the TPP enzyme family. As to quaternary structure, a homotetramer formed by a dimer of dimers; active sites are located in the dimer interface. It depends on Mg(2+) as a cofactor. Thiamine diphosphate is required as a cofactor.

The catalysed reaction is 2-hydroxyisobutanoyl-CoA = formyl-CoA + acetone. Activity is stimulated by thiamine diphosphate. Its function is as follows. A lyase that reversibly degrades 2-hydroxyisobutyryl-CoA (2-HIB-CoA) to acetone and formyl-CoA. Probably also cleaves 2-hydroxy-2-methylbutyryl-CoA to butanone and formyl-CoA. Does not act on 2-hydroxy-2-ethylbutyryl-CoA. A C-terminal lid closes the active site upon substrate binding, and with residues Leu-127 and Ile-492 restricts the size of the active site cavity so it can only use short-chain (C4 and C5) acyl substrates. Part of a pathway that allows cells to grow on 2-methylpropane-1,2-diol or 2-hydroxyisobutyric acid (2-HIBA) as a sole carbon source. The polypeptide is 2-hydroxyacyl-CoA lyase (Actinomycetospora chiangmaiensis (strain DSM 45062 / JCM 15998 / CCTCC AA 205017 / NBRC 104400 / YIM 0006)).